A 401-amino-acid chain; its full sequence is Argininosuccinate synthase (401 aa).

9 to 17 (AYSGGLDTS) lines the ATP pocket. Position 86 (Tyr-86) interacts with L-citrulline. Position 116 (Gly-116) interacts with ATP. L-aspartate-binding residues include Thr-118, Asn-122, and Asp-123. Position 122 (Asn-122) interacts with L-citrulline. Positions 126, 174, 183, 259, and 271 each coordinate L-citrulline.

It belongs to the argininosuccinate synthase family. Type 1 subfamily. In terms of assembly, homotetramer.

It is found in the cytoplasm. It catalyses the reaction L-citrulline + L-aspartate + ATP = 2-(N(omega)-L-arginino)succinate + AMP + diphosphate + H(+). It functions in the pathway amino-acid biosynthesis; L-arginine biosynthesis; L-arginine from L-ornithine and carbamoyl phosphate: step 2/3. The protein is Argininosuccinate synthase of Bacillus thuringiensis (strain Al Hakam).